We begin with the raw amino-acid sequence, 310 residues long: Ribosomal RNA small subunit methyltransferase H (310 aa).

S-adenosyl-L-methionine is bound by residues 33 to 35, D53, Y83, D100, and Q107; that span reads AGH.

The protein belongs to the methyltransferase superfamily. RsmH family.

It localises to the cytoplasm. It carries out the reaction cytidine(1402) in 16S rRNA + S-adenosyl-L-methionine = N(4)-methylcytidine(1402) in 16S rRNA + S-adenosyl-L-homocysteine + H(+). Its function is as follows. Specifically methylates the N4 position of cytidine in position 1402 (C1402) of 16S rRNA. The sequence is that of Ribosomal RNA small subunit methyltransferase H from Clostridium perfringens (strain ATCC 13124 / DSM 756 / JCM 1290 / NCIMB 6125 / NCTC 8237 / Type A).